The chain runs to 123 residues: uncharacterized protein (123 aa).

This is an uncharacterized protein from Autographa californica nuclear polyhedrosis virus (AcMNPV).